We begin with the raw amino-acid sequence, 144 residues long: 3-hydroxyacyl-[acyl-carrier-protein] dehydratase FabZ (144 aa).

Residue H52 is part of the active site.

This sequence belongs to the thioester dehydratase family. FabZ subfamily.

Its subcellular location is the cytoplasm. The enzyme catalyses a (3R)-hydroxyacyl-[ACP] = a (2E)-enoyl-[ACP] + H2O. Functionally, involved in unsaturated fatty acids biosynthesis. Catalyzes the dehydration of short chain beta-hydroxyacyl-ACPs and long chain saturated and unsaturated beta-hydroxyacyl-ACPs. In Syntrophomonas wolfei subsp. wolfei (strain DSM 2245B / Goettingen), this protein is 3-hydroxyacyl-[acyl-carrier-protein] dehydratase FabZ.